Consider the following 307-residue polypeptide: Streptomycin 6-kinase (307 aa).

Residue 133–145 (LAGLLNRLHSVPA) participates in streptomycin binding. Aspartate 201 serves as the catalytic Proton acceptor.

It belongs to the aminoglycoside phosphotransferase family.

The enzyme catalyses streptomycin + ATP = streptomycin 6-phosphate + ADP + H(+). In terms of biological role, the aminoglycoside phosphotransferases achieve inactivation of their antibiotic substrates by phosphorylation. The chain is Streptomycin 6-kinase (aphD) from Streptomyces griseus.